The chain runs to 486 residues: Sensor protein PhoQ (486 aa).

Topologically, residues 1 to 16 (MKKLLHLFFPLSLRVR) are cytoplasmic. Residues 17 to 37 (FLLATAAVVLVLSLAYGMVAL) form a helical membrane-spanning segment. Residues 38 to 194 (IGYSVSFDKT…LKSSYMVWSW (157 aa)) lie on the Periplasmic side of the membrane. 2 residues coordinate a divalent metal cation: D151 and D152. A helical transmembrane segment spans residues 195-215 (FIYVLSANLLLVIPLLWVAAW). The HAMP domain occupies 215–266 (WWSLRPIEALAKEVRELEEHNRELLNPATTRELTSLVRNLNRLLKSERERYD). Residues 216-486 (WSLRPIEALA…GRQHSAPKDE (271 aa)) lie on the Cytoplasmic side of the membrane. A Histidine kinase domain is found at 274–480 (DLTHSLKTPL…RMEVIFGRQH (207 aa)). A Phosphohistidine; by autocatalysis modification is found at H277. Position 385 (N385) interacts with Mg(2+). ATP-binding positions include 385-393 (NVLDNACKY), 415-420 (DDGPGI), and 434-446 (RVDT…GVGL). Q442 contacts Mg(2+).

In terms of assembly, homodimer.

The protein resides in the cell inner membrane. It catalyses the reaction ATP + protein L-histidine = ADP + protein N-phospho-L-histidine.. Its function is as follows. Member of the two-component regulatory system PhoP/PhoQ involved in virulence, adaptation to low Mg(2+) environments and the control of acid resistance genes. In low periplasmic Mg(2+), PhoQ functions as a membrane-associated protein kinase that undergoes autophosphorylation and subsequently transfers the phosphate to PhoP, resulting in the expression of PhoP-activated genes (PAG) and repression of PhoP-repressed genes (PRG). In high periplasmic Mg(2+), acts as a protein phosphatase that dephosphorylates phospho-PhoP, which results in the repression of PG and may lead to expression of some PRG. The protein is Sensor protein PhoQ (phoQ) of Escherichia coli O6:H1 (strain CFT073 / ATCC 700928 / UPEC).